The chain runs to 498 residues: L-proline--[L-prolyl-carrier protein] ligase (498 aa).

It belongs to the ATP-dependent AMP-binding enzyme family.

It catalyses the reaction holo-[peptidyl-carrier protein] + L-proline + ATP = L-prolyl-[peptidyl-carrier protein] + AMP + diphosphate. In terms of biological role, involved in the biosynthesis of pyoluteorin. Catalyzes the conversion of L-proline to L-prolyl-AMP and the transfer of the L-prolyl group to acyl carrier protein PltL. This chain is L-proline--[L-prolyl-carrier protein] ligase, found in Pseudomonas fluorescens (strain ATCC BAA-477 / NRRL B-23932 / Pf-5).